The sequence spans 265 residues: Type III pantothenate kinase (265 aa).

17 to 24 provides a ligand contact to ATP; the sequence is DIGNTSIS. 114–117 contributes to the substrate binding site; that stretch reads GSDV. The active-site Proton acceptor is the aspartate 116. Aspartate 137 contacts K(+). Threonine 140 contacts ATP. A substrate-binding site is contributed by threonine 192.

It belongs to the type III pantothenate kinase family. As to quaternary structure, homodimer. Requires NH4(+) as cofactor. It depends on K(+) as a cofactor.

The protein resides in the cytoplasm. It catalyses the reaction (R)-pantothenate + ATP = (R)-4'-phosphopantothenate + ADP + H(+). The protein operates within cofactor biosynthesis; coenzyme A biosynthesis; CoA from (R)-pantothenate: step 1/5. In terms of biological role, catalyzes the phosphorylation of pantothenate (Pan), the first step in CoA biosynthesis. In Borrelia hermsii (strain HS1 / DAH), this protein is Type III pantothenate kinase.